A 283-amino-acid chain; its full sequence is MANIRTLSDYASSPPRGSSALEGEVGQGGSPLPLFFPSGTQSGENVSWIQWLCPGIHLKSPIIIISFVQIAVYIASLAAGLAPNEILAPTPQTLVMFGANIPELIRVGEIWRLICPLFLHLNLFHILMNLWVQIRIGLTMEEKYGWKMLLAVYFGVGVLANMISAAVLFCGQMKAGASTAVFALIGVQLAELALIWHAIQDRNSAIISVCICLFFVFVSSFGSHMDSVGHIGGLVMGFAAGIWLNENSDIKPTWYDRARLTSQVALAAAPILSCIFIFLVPRC.

The segment covering 1-11 has biased composition (polar residues); it reads MANIRTLSDYA. The tract at residues 1-26 is disordered; it reads MANIRTLSDYASSPPRGSSALEGEVG. 3 helical membrane passes run 62 to 82, 114 to 134, and 149 to 169; these read IIII…AGLA, ICPL…WVQI, and LLAV…AVLF. Ser178 serves as the catalytic Nucleophile. 4 helical membrane passes run 179–199, 205–225, 227–247, and 260–280; these read TAVF…WHAI, AIIS…GSHM, SVGH…LNEN, and LTSQ…IFLV. His230 is an active-site residue.

It belongs to the peptidase S54 family.

It is found in the membrane. It carries out the reaction Cleaves type-1 transmembrane domains using a catalytic dyad composed of serine and histidine that are contributed by different transmembrane domains.. Functionally, serine protease involved in intramembrane proteolysis and the subsequent release of polypeptides from their membrane anchors. The chain is Rhomboid-like protease 2 (ROM2) from Toxoplasma gondii.